We begin with the raw amino-acid sequence, 395 residues long: Elongation factor Tu (395 aa).

A tr-type G domain is found at 10–205; that stretch reads KPHVNIGTIG…VDNWIPIPPR (196 aa). Positions 19-26 are G1; it reads GHVDHGKT. Residue 19-26 participates in GTP binding; sequence GHVDHGKT. Thr26 lines the Mg(2+) pocket. The segment at 60-64 is G2; the sequence is GITIN. The G3 stretch occupies residues 81 to 84; sequence DCPG. Residues 81-85 and 136-139 each bind GTP; these read DCPGH and NKVD. The tract at residues 136–139 is G4; the sequence is NKVD. A G5 region spans residues 174-176; that stretch reads SAL.

It belongs to the TRAFAC class translation factor GTPase superfamily. Classic translation factor GTPase family. EF-Tu/EF-1A subfamily. In terms of assembly, monomer.

Its subcellular location is the cytoplasm. It catalyses the reaction GTP + H2O = GDP + phosphate + H(+). GTP hydrolase that promotes the GTP-dependent binding of aminoacyl-tRNA to the A-site of ribosomes during protein biosynthesis. The protein is Elongation factor Tu of Hymenobacter ocellatus (Parahymenobacter ocellatus).